A 233-amino-acid polypeptide reads, in one-letter code: C-type lectin domain family 2 member D6 (233 aa).

The disordered stretch occupies residues 1 to 45; the sequence is MPSSAHLQDSPPLLSRTLTQNEGQTSLRQSSSCGPSATSASESLS. Topologically, residues 1 to 73 are cytoplasmic; the sequence is MPSSAHLQDS…GIILPESPAK (73 aa). Polar residues predominate over residues 16–29; sequence RTLTQNEGQTSLRQ. Positions 30–43 are enriched in low complexity; it reads SSSCGPSATSASES. Residues 74-94 traverse the membrane as a helical; Signal-anchor for type II membrane protein segment; sequence LLCCCAVIVVLSVAVVALSVA. Over 95–233 the chain is Extracellular; that stretch reads LSVKKTPQIS…KLNSYTSQCQ (139 aa). The C-type lectin domain maps to 119–230; that stretch reads VGNKCYYFNE…ICSKLNSYTS (112 aa). N132 carries N-linked (GlcNAc...) asparagine glycosylation.

It localises to the cell membrane. Its function is as follows. Lectin-type cell surface receptor. This Rattus norvegicus (Rat) protein is C-type lectin domain family 2 member D6 (Clec2d6).